Here is a 499-residue protein sequence, read N- to C-terminus: Maturase K (499 aa).

It belongs to the intron maturase 2 family. MatK subfamily.

The protein localises to the plastid. It is found in the chloroplast. In terms of biological role, usually encoded in the trnK tRNA gene intron. Probably assists in splicing its own and other chloroplast group II introns. The sequence is that of Maturase K from Batis maritima (Maritime saltwort).